The primary structure comprises 330 residues: Aspartate--ammonia ligase (330 aa).

The protein belongs to the class-II aminoacyl-tRNA synthetase family. AsnA subfamily.

It is found in the cytoplasm. It carries out the reaction L-aspartate + NH4(+) + ATP = L-asparagine + AMP + diphosphate + H(+). It functions in the pathway amino-acid biosynthesis; L-asparagine biosynthesis; L-asparagine from L-aspartate (ammonia route): step 1/1. The sequence is that of Aspartate--ammonia ligase from Haemophilus influenzae (strain ATCC 51907 / DSM 11121 / KW20 / Rd).